Here is a 161-residue protein sequence, read N- to C-terminus: Zinc finger protein KNUCKLES (161 aa).

Positions 1–33 (MAEPPPSYLHFVGPAKTRSSSKRHSFSSSAHPA) are disordered. A C2H2-type zinc finger spans residues 38–60 (FPCQYCPRKFYTSQALGGHQNAH). Residues 142 to 161 (GGNGVMEEDEPLDLDLSLRL) are disordered. The EAR-like (transcriptional repression) signature appears at 155–159 (LDLSL).

First expressed in developing carpel primordia, and later in stamens and ovules of flower buds.

The protein resides in the nucleus. May function as a transcriptional repressor of cellular proliferation that regulates floral determinacy and relative size of basal pattern elements along the proximo-distal axis of the developing gynoecium. In Arabidopsis thaliana (Mouse-ear cress), this protein is Zinc finger protein KNUCKLES (KNU).